The primary structure comprises 383 residues: Succinyl-diaminopimelate desuccinylase (383 aa).

His70 is a Zn(2+) binding site. The active site involves Asp72. Asp103 provides a ligand contact to Zn(2+). Glu137 acts as the Proton acceptor in catalysis. Zn(2+) contacts are provided by Glu138, Glu166, and His352.

It belongs to the peptidase M20A family. DapE subfamily. Homodimer. Requires Zn(2+) as cofactor. Co(2+) serves as cofactor.

It catalyses the reaction N-succinyl-(2S,6S)-2,6-diaminopimelate + H2O = (2S,6S)-2,6-diaminopimelate + succinate. It participates in amino-acid biosynthesis; L-lysine biosynthesis via DAP pathway; LL-2,6-diaminopimelate from (S)-tetrahydrodipicolinate (succinylase route): step 3/3. Its function is as follows. Catalyzes the hydrolysis of N-succinyl-L,L-diaminopimelic acid (SDAP), forming succinate and LL-2,6-diaminopimelate (DAP), an intermediate involved in the bacterial biosynthesis of lysine and meso-diaminopimelic acid, an essential component of bacterial cell walls. This is Succinyl-diaminopimelate desuccinylase from Hahella chejuensis (strain KCTC 2396).